A 268-amino-acid chain; its full sequence is Shikimate dehydrogenase (NADP(+)) (268 aa).

Shikimate contacts are provided by residues 14-16 (SKS) and T61. The active-site Proton acceptor is K65. Residues N86 and D102 each contribute to the shikimate site. Residues 126–130 (GAGGA), 149–154 (NRTFLK), and M213 each bind NADP(+). Y215 contacts shikimate. Position 238 (G238) interacts with NADP(+).

Belongs to the shikimate dehydrogenase family. As to quaternary structure, homodimer.

It carries out the reaction shikimate + NADP(+) = 3-dehydroshikimate + NADPH + H(+). Its pathway is metabolic intermediate biosynthesis; chorismate biosynthesis; chorismate from D-erythrose 4-phosphate and phosphoenolpyruvate: step 4/7. Its function is as follows. Involved in the biosynthesis of the chorismate, which leads to the biosynthesis of aromatic amino acids. Catalyzes the reversible NADPH linked reduction of 3-dehydroshikimate (DHSA) to yield shikimate (SA). This Haemophilus influenzae (strain PittGG) protein is Shikimate dehydrogenase (NADP(+)).